Here is an 896-residue protein sequence, read N- to C-terminus: Isoleucine--tRNA ligase (896 aa).

The 'HIGH' region motif lies at 57–67 (PYANNNIHIGH). Glu543 provides a ligand contact to L-isoleucyl-5'-AMP. The short motif at 584-588 (KMSKS) is the 'KMSKS' region element. Lys587 serves as a coordination point for ATP. Residues Cys869, Cys872, Cys885, and Cys888 each coordinate Zn(2+).

The protein belongs to the class-I aminoacyl-tRNA synthetase family. IleS type 1 subfamily. In terms of assembly, monomer. It depends on Zn(2+) as a cofactor.

The protein resides in the cytoplasm. It carries out the reaction tRNA(Ile) + L-isoleucine + ATP = L-isoleucyl-tRNA(Ile) + AMP + diphosphate. In terms of biological role, catalyzes the attachment of isoleucine to tRNA(Ile). As IleRS can inadvertently accommodate and process structurally similar amino acids such as valine, to avoid such errors it has two additional distinct tRNA(Ile)-dependent editing activities. One activity is designated as 'pretransfer' editing and involves the hydrolysis of activated Val-AMP. The other activity is designated 'posttransfer' editing and involves deacylation of mischarged Val-tRNA(Ile). This Acholeplasma laidlawii (strain PG-8A) protein is Isoleucine--tRNA ligase.